A 1076-amino-acid polypeptide reads, in one-letter code: Carbamoyl phosphate synthase large chain (1076 aa).

The interval 1–403 (MPKRTDIQSI…SLQKALRGLE (403 aa)) is carboxyphosphate synthetic domain. Arg-129, Arg-169, Gly-175, Gly-176, Glu-208, Leu-210, Glu-215, Gly-241, Val-242, His-243, Gln-285, and Glu-299 together coordinate ATP. The 196-residue stretch at 133–328 (DQAMKRIGLE…IAKIAAKLAV (196 aa)) folds into the ATP-grasp 1 domain. Mg(2+)-binding residues include Gln-285, Glu-299, and Asn-301. Mn(2+) is bound by residues Gln-285, Glu-299, and Asn-301. The oligomerization domain stretch occupies residues 404-553 (TGNDGLDPKV…YSSYEEECEA (150 aa)). The segment at 554 to 935 (EVSDRPKIMV…AFYKAQLGAG (382 aa)) is carbamoyl phosphate synthetic domain. In terms of domain architecture, ATP-grasp 2 spans 678 to 869 (QHMVDKLGLK…LAQVAARCMA (192 aa)). Residues Arg-714, His-753, Leu-755, Glu-760, Gly-785, Val-786, His-787, Ser-788, Gln-828, and Glu-840 each coordinate ATP. Gln-828, Glu-840, and Asn-842 together coordinate Mg(2+). Positions 828, 840, and 842 each coordinate Mn(2+). An MGS-like domain is found at 936-1076 (EAIPALEGER…LQELHAGVSQ (141 aa)). An allosteric domain region spans residues 936 to 1076 (EAIPALEGER…LQELHAGVSQ (141 aa)).

The protein belongs to the CarB family. Composed of two chains; the small (or glutamine) chain promotes the hydrolysis of glutamine to ammonia, which is used by the large (or ammonia) chain to synthesize carbamoyl phosphate. Tetramer of heterodimers (alpha,beta)4. The cofactor is Mg(2+). Requires Mn(2+) as cofactor.

It carries out the reaction hydrogencarbonate + L-glutamine + 2 ATP + H2O = carbamoyl phosphate + L-glutamate + 2 ADP + phosphate + 2 H(+). The enzyme catalyses hydrogencarbonate + NH4(+) + 2 ATP = carbamoyl phosphate + 2 ADP + phosphate + 2 H(+). Its pathway is amino-acid biosynthesis; L-arginine biosynthesis; carbamoyl phosphate from bicarbonate: step 1/1. It participates in pyrimidine metabolism; UMP biosynthesis via de novo pathway; (S)-dihydroorotate from bicarbonate: step 1/3. Its function is as follows. Large subunit of the glutamine-dependent carbamoyl phosphate synthetase (CPSase). CPSase catalyzes the formation of carbamoyl phosphate from the ammonia moiety of glutamine, carbonate, and phosphate donated by ATP, constituting the first step of 2 biosynthetic pathways, one leading to arginine and/or urea and the other to pyrimidine nucleotides. The large subunit (synthetase) binds the substrates ammonia (free or transferred from glutamine from the small subunit), hydrogencarbonate and ATP and carries out an ATP-coupled ligase reaction, activating hydrogencarbonate by forming carboxy phosphate which reacts with ammonia to form carbamoyl phosphate. The sequence is that of Carbamoyl phosphate synthase large chain from Halomonas eurihalina.